Consider the following 105-residue polypeptide: Protein RALF-like 21 (105 aa).

Positions 1 to 30 (MSNMKITNRFMLVATFIACVFISSMNMTVG) are cleaved as a signal peptide. Cystine bridges form between cysteine 44/cysteine 53 and cysteine 67/cysteine 73.

It belongs to the plant rapid alkalinization factor (RALF) family. In terms of tissue distribution, expressed in seeds and rosettes.

The protein localises to the secreted. Cell signaling peptide that may regulate plant stress, growth, and development. Mediates a rapid alkalinization of extracellular space by mediating a transient increase in the cytoplasmic Ca(2+) concentration leading to a calcium-dependent signaling events through a cell surface receptor and a concomitant activation of some intracellular mitogen-activated protein kinases. This is Protein RALF-like 21 (RALFL21) from Arabidopsis thaliana (Mouse-ear cress).